The chain runs to 354 residues: UPF0421 protein BH2644 (354 aa).

Helical transmembrane passes span 22 to 42, 60 to 80, 107 to 127, and 133 to 153; these read AVCL…FAVI, LIRL…AYFF, TLVA…HLFA, and VAGT…ILPP.

The protein belongs to the UPF0421 family.

Its subcellular location is the cell membrane. This Halalkalibacterium halodurans (strain ATCC BAA-125 / DSM 18197 / FERM 7344 / JCM 9153 / C-125) (Bacillus halodurans) protein is UPF0421 protein BH2644.